The sequence spans 507 residues: Alkyl hydroperoxide reductase subunit F (507 aa).

An FAD-binding site is contributed by 207–222; sequence DVLIVGGGPASGSAAI. An intrachain disulfide couples Cys335 to Cys338. 347-361 is an NAD(+) binding site; sequence DVAVIGGGNSGVEAA. 467 to 477 lines the FAD pocket; that stretch reads TNVPGIFAAGD.

It belongs to the class-II pyridine nucleotide-disulfide oxidoreductase family. In terms of assembly, homodimer. It depends on FAD as a cofactor.

Its function is as follows. Serves to protect the cell against DNA damage by alkyl hydroperoxides. It can use either NADH or NADPH as electron donor for direct reduction of redox dyes or of alkyl hydroperoxides when combined with the AhpC protein. The polypeptide is Alkyl hydroperoxide reductase subunit F (ahpF) (Staphylococcus aureus (strain NCTC 8325 / PS 47)).